We begin with the raw amino-acid sequence, 229 residues long: Molybdenum transport system permease protein ModB (229 aa).

At 1–16 the chain is on the periplasmic side; the sequence is MILTDPEWQAVLLSLK. Residues 11 to 219 enclose the ABC transmembrane type-1 domain; the sequence is VLLSLKVSSL…MISLLISEWL (209 aa). Residues 17 to 37 traverse the membrane as a helical segment; sequence VSSLAVLFSLPFGIFFAWLLV. The Cytoplasmic segment spans residues 38–49; that stretch reads RCTFPGKALLDS. A helical transmembrane segment spans residues 50 to 70; that stretch reads VLHLPLVLPPVVVGYLLLVSM. Topologically, residues 71-83 are periplasmic; the sequence is GRRGFIGERLYDW. Residues 84 to 104 form a helical membrane-spanning segment; the sequence is FGITFAFSWRGAVLAAAVMSF. The Cytoplasmic segment spans residues 105-136; that stretch reads PLMVRAIRLALEGVDVKLEQAARTLGAGRWRV. The chain crosses the membrane as a helical span at residues 137–157; sequence FFTITLPLTLPGIIVGTVLAF. The Periplasmic portion of the chain corresponds to 158-201; the sequence is ARSLGEFGATITFVSNIPGETRTIPSAMYTLIQTPGGESGAARL. The chain crosses the membrane as a helical span at residues 202–222; that stretch reads CIISIALAMISLLISEWLARI. Residues 223-229 are Cytoplasmic-facing; that stretch reads SRERAGR.

Belongs to the binding-protein-dependent transport system permease family. CysTW subfamily.

It is found in the cell inner membrane. Part of the binding-protein-dependent transport system for molybdenum; probably responsible for the translocation of the substrate across the membrane. The protein is Molybdenum transport system permease protein ModB (modB) of Escherichia coli O157:H7.